The following is a 78-amino-acid chain: Acyl carrier protein (78 aa).

In terms of domain architecture, Carrier spans 4-78 (AEIKDKVYDI…QQAIDYIVKK (75 aa)). S39 is modified (O-(pantetheine 4'-phosphoryl)serine).

This sequence belongs to the acyl carrier protein (ACP) family. 4'-phosphopantetheine is transferred from CoA to a specific serine of apo-ACP by AcpS. This modification is essential for activity because fatty acids are bound in thioester linkage to the sulfhydryl of the prosthetic group.

It is found in the cytoplasm. It functions in the pathway lipid metabolism; fatty acid biosynthesis. Functionally, carrier of the growing fatty acid chain in fatty acid biosynthesis. This Chlorobium limicola (strain DSM 245 / NBRC 103803 / 6330) protein is Acyl carrier protein.